The sequence spans 87 residues: Colicin-E7 immunity protein (87 aa).

The protein belongs to the colicins ColE2/ColE8/ColE9 and pyocins S1/S2 family.

In terms of biological role, this protein is able to protect a cell, which harbors the plasmid ColE7 encoding colicin E7, against colicin E7, it binds specifically to the DNase-type colicin and inhibits its bactericidal activity. Dimeric ImmE7 may possess a RNase activity that cleaves its own mRNA at a specific site and thus autoregulates translational expression of the downstream ceiE7 gene as well as degradation of the upstream ceaE7 mRNA. The chain is Colicin-E7 immunity protein (imm) from Escherichia coli.